The primary structure comprises 754 residues: FAD-dependent monooxygenase ntnA (754 aa).

A helical transmembrane segment spans residues 3–23; sequence IPFKVLIIGGGVAGLTLAIML. 3 residues coordinate FAD: E34, G48, and R109. Y218 is an active-site residue. FAD-binding residues include D311 and A324. Helical transmembrane passes span 446 to 466, 486 to 506, 536 to 556, and 563 to 583; these read PLATFSWVTVLILAASSPWLA, AEVLELYISILSVSISGMWVI, ILPIYICFYILSSQSVVYYYM, and LGVAKALLPALLVVYTVSAVC. N586 carries an N-linked (GlcNAc...) asparagine glycan. Residues 595-615 form a helical membrane-spanning segment; that stretch reads SWWFTADFAFPVVAYLSGMFL. N-linked (GlcNAc...) asparagine glycosylation is present at N616. 2 consecutive transmembrane segments (helical) span residues 644–664 and 679–697; these read IAFVGFVAYAALASQYGTTIL and LASLTTVTTLWCLYSAWEL. N-linked (GlcNAc...) asparagine glycosylation occurs at N701. Residues 712–732 form a helical membrane-spanning segment; it reads LTILSSTIFGGPAATLAGTFI.

Belongs to the paxM FAD-dependent monooxygenase family. The cofactor is FAD.

It localises to the membrane. The protein operates within secondary metabolite biosynthesis; terpenoid biosynthesis. Its function is as follows. FAD-dependent monooxygenase; part of the gene cluster that mediates the biosynthesis of the meroterpenoids nectripenoids A and B, as well as cochliquninone D and isocochliquninone E. The pathway probably begins with the HR-PKS ntnH that catalyzes two chain-extension steps to form a reduced triketide, which then primes the SAT domain in the NR-PKS ntnG to initiate three more cycles of extension to give a linear hexaketide corresponding to the polyketide part of nectripenoids. The FAD-dependent monooxygenase ntnJ then performs an oxidative decarboxylation at C11 of the ntnH/ntnG product, via an electrophilic aromatic hydroxylation with concomitant ipso-decarboxylation. The membrane-bound polyprenyl transferase ntnF then introduces a farnesyl group before the FAD-dependent monooxygenase ntnK functions as the first epoxidase on terminal C12'-C13' olefin, followed by a second epoxidation on C7'-C8' catalyzed by ntnA. The terpene cyclase/mutase ntnI then initiates the sequential tricyclic ring formation through protonation of the terminal epoxide and catalyzes the regioselective and stereoselective 6/6/6-tricyclic ring formation. The cytochrome P450 monooxygenase ntnM may then hydroxylate C1'. In Nectria sp, this protein is FAD-dependent monooxygenase ntnA.